The sequence spans 175 residues: Thioredoxin-like protein CITRX, chloroplastic (175 aa).

The N-terminal 64 residues, 1-64 (MQAASLAFHP…KPPAVGKYVR (64 aa)), are a transit peptide targeting the chloroplast. In terms of domain architecture, Thioredoxin spans 74–175 (AKEIQELIKG…MMRDIIDNDL (102 aa)). Active-site nucleophile residues include Cys-98 and Cys-101. A disulfide bridge connects residues Cys-98 and Cys-101.

This sequence belongs to the thioredoxin family. Plant CITRX-type subfamily. In terms of assembly, interacts with Cf-9 resistance protein.

The protein localises to the plastid. It localises to the chloroplast. Its function is as follows. Probable thiol-disulfide oxidoreductase that may play a role in proper chloroplast development. This chain is Thioredoxin-like protein CITRX, chloroplastic, found in Solanum lycopersicum (Tomato).